The sequence spans 228 residues: Cytochrome c oxidase subunit 2 (228 aa).

Residues 1 to 26 are Mitochondrial intermembrane-facing; it reads MSQWFQLGLQNGNSPLMEQLIFFHDH. A helical membrane pass occupies residues 27–48; that stretch reads ALLVVILITSLVGFFLAALFSN. Topologically, residues 49–62 are mitochondrial matrix; it reads KFLHRYLLDGQAIE. The helical transmembrane segment at 63–82 threads the bilayer; that stretch reads TVWTVIPAIILVAIALPSIR. Residues 83–228 are Mitochondrial intermembrane-facing; that stretch reads LLYLIDEIHN…FLKWLELQIS (146 aa). Cu cation-binding residues include His-161, Cys-196, Glu-198, Cys-200, His-204, and Met-207. Glu-198 contacts Mg(2+).

The protein belongs to the cytochrome c oxidase subunit 2 family. In terms of assembly, component of the cytochrome c oxidase (complex IV, CIV), a multisubunit enzyme composed of a catalytic core of 3 subunits and several supernumerary subunits. The complex exists as a monomer or a dimer and forms supercomplexes (SCs) in the inner mitochondrial membrane with ubiquinol-cytochrome c oxidoreductase (cytochrome b-c1 complex, complex III, CIII). The cofactor is Cu cation.

It is found in the mitochondrion inner membrane. The catalysed reaction is 4 Fe(II)-[cytochrome c] + O2 + 8 H(+)(in) = 4 Fe(III)-[cytochrome c] + 2 H2O + 4 H(+)(out). Its function is as follows. Component of the cytochrome c oxidase, the last enzyme in the mitochondrial electron transport chain which drives oxidative phosphorylation. The respiratory chain contains 3 multisubunit complexes succinate dehydrogenase (complex II, CII), ubiquinol-cytochrome c oxidoreductase (cytochrome b-c1 complex, complex III, CIII) and cytochrome c oxidase (complex IV, CIV), that cooperate to transfer electrons derived from NADH and succinate to molecular oxygen, creating an electrochemical gradient over the inner membrane that drives transmembrane transport and the ATP synthase. Cytochrome c oxidase is the component of the respiratory chain that catalyzes the reduction of oxygen to water. Electrons originating from reduced cytochrome c in the intermembrane space (IMS) are transferred via the dinuclear copper A center (CU(A)) of subunit 2 and heme A of subunit 1 to the active site in subunit 1, a binuclear center (BNC) formed by heme A3 and copper B (CU(B)). The BNC reduces molecular oxygen to 2 water molecules using 4 electrons from cytochrome c in the IMS and 4 protons from the mitochondrial matrix. The polypeptide is Cytochrome c oxidase subunit 2 (COII) (Artemia franciscana (Brine shrimp)).